A 208-amino-acid chain; its full sequence is Uracil phosphoribosyltransferase (208 aa).

5-phospho-alpha-D-ribose 1-diphosphate is bound by residues R77, R102, and 129–137 (DPMLATGNS). Residues I193 and 198 to 200 (GDA) each bind uracil. D199 serves as a coordination point for 5-phospho-alpha-D-ribose 1-diphosphate.

The protein belongs to the UPRTase family. Requires Mg(2+) as cofactor.

It carries out the reaction UMP + diphosphate = 5-phospho-alpha-D-ribose 1-diphosphate + uracil. It functions in the pathway pyrimidine metabolism; UMP biosynthesis via salvage pathway; UMP from uracil: step 1/1. With respect to regulation, allosterically activated by GTP. Functionally, catalyzes the conversion of uracil and 5-phospho-alpha-D-ribose 1-diphosphate (PRPP) to UMP and diphosphate. This is Uracil phosphoribosyltransferase from Mycoplasmopsis agalactiae (strain NCTC 10123 / CIP 59.7 / PG2) (Mycoplasma agalactiae).